The sequence spans 222 residues: Matrix protein (222 aa).

The PTAP/PSAP motif signature appears at 46–49 (PTAP).

As to quaternary structure, homomultimer. Interacts with viral nucleocapsid. Interacts with host TSG101.

Its subcellular location is the virion membrane. It localises to the host endomembrane system. The protein resides in the host nucleus membrane. Functionally, plays a major role in assembly and budding of virion, by recruiting cellular partners of the ESCRT complexes that play a key role in releasing the budding particle from the host membrane. Condensates the ribonucleocapsid core during virus assembly. This chain is Matrix protein (M), found in Drosophila melanogaster (Fruit fly).